An 874-amino-acid chain; its full sequence is Alanine--tRNA ligase (874 aa).

Positions 563, 567, 665, and 669 each coordinate Zn(2+).

It belongs to the class-II aminoacyl-tRNA synthetase family. Zn(2+) is required as a cofactor.

It is found in the cytoplasm. The enzyme catalyses tRNA(Ala) + L-alanine + ATP = L-alanyl-tRNA(Ala) + AMP + diphosphate. In terms of biological role, catalyzes the attachment of alanine to tRNA(Ala) in a two-step reaction: alanine is first activated by ATP to form Ala-AMP and then transferred to the acceptor end of tRNA(Ala). Also edits incorrectly charged Ser-tRNA(Ala) and Gly-tRNA(Ala) via its editing domain. This Haemophilus influenzae (strain 86-028NP) protein is Alanine--tRNA ligase.